The primary structure comprises 155 residues: MHIEQIEGTLSAAGMRIALVVSRFNDFIGQKLVEGAVDCIRRHGGSEEQMAIYRCPGAFELPMVSKKAALSGKYDAVIALGVIIRGSTPHFDVIAAEATKGIAQASLETMIPIAFGVLTTENLEQAIERAGTKAGNKGFDAAMTAIEMVNLYRQM.

Residues Phe24, 58–60, and 82–84 each bind 5-amino-6-(D-ribitylamino)uracil; these read AFE and VII. Residue 87 to 88 participates in (2S)-2-hydroxy-3-oxobutyl phosphate binding; it reads ST. Catalysis depends on His90, which acts as the Proton donor. Phe115 is a binding site for 5-amino-6-(D-ribitylamino)uracil. Arg129 contacts (2S)-2-hydroxy-3-oxobutyl phosphate.

This sequence belongs to the DMRL synthase family.

The enzyme catalyses (2S)-2-hydroxy-3-oxobutyl phosphate + 5-amino-6-(D-ribitylamino)uracil = 6,7-dimethyl-8-(1-D-ribityl)lumazine + phosphate + 2 H2O + H(+). Its pathway is cofactor biosynthesis; riboflavin biosynthesis; riboflavin from 2-hydroxy-3-oxobutyl phosphate and 5-amino-6-(D-ribitylamino)uracil: step 1/2. Functionally, catalyzes the formation of 6,7-dimethyl-8-ribityllumazine by condensation of 5-amino-6-(D-ribitylamino)uracil with 3,4-dihydroxy-2-butanone 4-phosphate. This is the penultimate step in the biosynthesis of riboflavin. The sequence is that of 6,7-dimethyl-8-ribityllumazine synthase from Chlorobium chlorochromatii (strain CaD3).